A 469-amino-acid chain; its full sequence is Protein CrtJ (469 aa).

Residues 153–225 (IETRYRVLLE…NLAKIAGSDP (73 aa)) form the PAS domain.

The protein operates within carotenoid biosynthesis; spheroidene biosynthesis. The polypeptide is Protein CrtJ (crtJ) (Rhodobacter capsulatus (Rhodopseudomonas capsulata)).